Consider the following 198-residue polypeptide: Segregation and condensation protein B (198 aa).

It belongs to the ScpB family. Homodimer. Homodimerization may be required to stabilize the binding of ScpA to the Smc head domains. Component of a cohesin-like complex composed of ScpA, ScpB and the Smc homodimer, in which ScpA and ScpB bind to the head domain of Smc. The presence of the three proteins is required for the association of the complex with DNA.

It is found in the cytoplasm. Its function is as follows. Participates in chromosomal partition during cell division. May act via the formation of a condensin-like complex containing Smc and ScpA that pull DNA away from mid-cell into both cell halves. This is Segregation and condensation protein B from Acetivibrio thermocellus (strain ATCC 27405 / DSM 1237 / JCM 9322 / NBRC 103400 / NCIMB 10682 / NRRL B-4536 / VPI 7372) (Clostridium thermocellum).